We begin with the raw amino-acid sequence, 113 residues long: Gonadotropin subunit beta (113 aa).

6 cysteine pairs are disulfide-bonded: Cys6–Cys54, Cys20–Cys69, Cys23–Cys107, Cys31–Cys85, Cys35–Cys87, and Cys90–Cys97. Residue Asn10 is glycosylated (N-linked (GlcNAc...) asparagine).

This sequence belongs to the glycoprotein hormones subunit beta family. In terms of assembly, heterodimer of an alpha and a beta chain.

Its subcellular location is the secreted. Involved in gametogenesis and steroidogenesis. The protein is Gonadotropin subunit beta (cgb) of Muraenesox cinereus (Daggertooth pike conger).